The sequence spans 525 residues: Eukaryotic translation initiation factor 3 subunit E (525 aa).

The segment covering 102-120 (QKELKEQQKEQQKEKDTDK) has biased composition (basic and acidic residues). The tract at residues 102 to 143 (QKELKEQQKEQQKEKDTDKTTPTTTDETTTTTTTAPTTTTTT) is disordered. Low complexity predominate over residues 121–143 (TTPTTTDETTTTTTTAPTTTTTT). One can recognise a PCI domain in the interval 261–440 (VYFYNPESRS…NQIKMFTQHN (180 aa)). Residues 463 to 525 (INESRSQQNR…TTTTATPTSA (63 aa)) are disordered. Low complexity predominate over residues 482–525 (RGQNRNQQNQQNQQSNESNETTTTTTTAAAATTTTTTTATPTSA).

Belongs to the eIF-3 subunit E family. In terms of assembly, component of the eukaryotic translation initiation factor 3 (eIF-3) complex.

It is found in the cytoplasm. In terms of biological role, component of the eukaryotic translation initiation factor 3 (eIF-3) complex, which is involved in protein synthesis of a specialized repertoire of mRNAs and, together with other initiation factors, stimulates binding of mRNA and methionyl-tRNAi to the 40S ribosome. The eIF-3 complex specifically targets and initiates translation of a subset of mRNAs involved in cell proliferation. This Dictyostelium discoideum (Social amoeba) protein is Eukaryotic translation initiation factor 3 subunit E (eif3E).